The following is a 115-amino-acid chain: Ig heavy chain V region PJ14 (115 aa).

An N-terminal signal peptide occupies residues 1–19; sequence MAVLALLFCLVTFPSCILS. Residues 20 to 115 enclose the Ig-like domain; it reads QVQLKESGPG…TDDTARYYCA (96 aa).

In Mus musculus (Mouse), this protein is Ig heavy chain V region PJ14.